We begin with the raw amino-acid sequence, 54 residues long: Small ribosomal subunit protein uS14 (54 aa).

Positions 19, 22, 37, and 40 each coordinate Zn(2+).

Belongs to the universal ribosomal protein uS14 family. Zinc-binding uS14 subfamily. As to quaternary structure, part of the 30S ribosomal subunit. Requires Zn(2+) as cofactor.

Functionally, binds 16S rRNA, required for the assembly of 30S particles. The polypeptide is Small ribosomal subunit protein uS14 (Pyrobaculum aerophilum (strain ATCC 51768 / DSM 7523 / JCM 9630 / CIP 104966 / NBRC 100827 / IM2)).